The following is a 539-amino-acid chain: Chaperonin GroEL (539 aa).

Residues 29–32, 86–90, Gly413, 476–478, and Asp492 contribute to the ATP site; these read TLGP, DGTTT, and NAA.

This sequence belongs to the chaperonin (HSP60) family. Forms a cylinder of 14 subunits composed of two heptameric rings stacked back-to-back. Interacts with the co-chaperonin GroES.

Its subcellular location is the cytoplasm. The catalysed reaction is ATP + H2O + a folded polypeptide = ADP + phosphate + an unfolded polypeptide.. In terms of biological role, together with its co-chaperonin GroES, plays an essential role in assisting protein folding. The GroEL-GroES system forms a nano-cage that allows encapsulation of the non-native substrate proteins and provides a physical environment optimized to promote and accelerate protein folding. The protein is Chaperonin GroEL of Streptococcus thermophilus (strain CNRZ 1066).